The primary structure comprises 474 residues: Siroheme synthase (474 aa).

The precorrin-2 dehydrogenase /sirohydrochlorin ferrochelatase stretch occupies residues 1–202 (MEYLPIFIDL…GRPKEANKVL (202 aa)). Residues 22–23 (AV) and 41–42 (PA) each bind NAD(+). Ser-126 carries the phosphoserine modification. The segment at 218–474 (GHVTLVGAGP…YLINSIINLI (257 aa)) is uroporphyrinogen-III C-methyltransferase. An S-adenosyl-L-methionine-binding site is contributed by Pro-227. Asp-250 (proton acceptor) is an active-site residue. The active-site Proton donor is the Lys-272. S-adenosyl-L-methionine-binding positions include 303 to 305 (GGD), Ile-308, 333 to 334 (TA), Met-385, and Gly-414.

It in the N-terminal section; belongs to the precorrin-2 dehydrogenase / sirohydrochlorin ferrochelatase family. This sequence in the C-terminal section; belongs to the precorrin methyltransferase family.

The enzyme catalyses uroporphyrinogen III + 2 S-adenosyl-L-methionine = precorrin-2 + 2 S-adenosyl-L-homocysteine + H(+). The catalysed reaction is precorrin-2 + NAD(+) = sirohydrochlorin + NADH + 2 H(+). It catalyses the reaction siroheme + 2 H(+) = sirohydrochlorin + Fe(2+). It participates in cofactor biosynthesis; adenosylcobalamin biosynthesis; precorrin-2 from uroporphyrinogen III: step 1/1. It functions in the pathway cofactor biosynthesis; adenosylcobalamin biosynthesis; sirohydrochlorin from precorrin-2: step 1/1. The protein operates within porphyrin-containing compound metabolism; siroheme biosynthesis; precorrin-2 from uroporphyrinogen III: step 1/1. Its pathway is porphyrin-containing compound metabolism; siroheme biosynthesis; siroheme from sirohydrochlorin: step 1/1. It participates in porphyrin-containing compound metabolism; siroheme biosynthesis; sirohydrochlorin from precorrin-2: step 1/1. Its function is as follows. Multifunctional enzyme that catalyzes the SAM-dependent methylations of uroporphyrinogen III at position C-2 and C-7 to form precorrin-2 via precorrin-1. Then it catalyzes the NAD-dependent ring dehydrogenation of precorrin-2 to yield sirohydrochlorin. Finally, it catalyzes the ferrochelation of sirohydrochlorin to yield siroheme. The protein is Siroheme synthase of Blochmanniella pennsylvanica (strain BPEN).